A 264-amino-acid chain; its full sequence is S-adenosylmethionine decarboxylase proenzyme (264 aa).

Serine 112 serves as the catalytic Schiff-base intermediate with substrate; via pyruvic acid. Serine 112 bears the Pyruvic acid (Ser); by autocatalysis mark. Histidine 117 (proton acceptor; for processing activity) is an active-site residue. Cysteine 140 serves as the catalytic Proton donor; for catalytic activity.

Belongs to the prokaryotic AdoMetDC family. Type 2 subfamily. Heterooctamer of four alpha and four beta chains arranged as a tetramer of alpha/beta heterodimers. It depends on pyruvate as a cofactor. Is synthesized initially as an inactive proenzyme. Formation of the active enzyme involves a self-maturation process in which the active site pyruvoyl group is generated from an internal serine residue via an autocatalytic post-translational modification. Two non-identical subunits are generated from the proenzyme in this reaction, and the pyruvate is formed at the N-terminus of the alpha chain, which is derived from the carboxyl end of the proenzyme. The post-translation cleavage follows an unusual pathway, termed non-hydrolytic serinolysis, in which the side chain hydroxyl group of the serine supplies its oxygen atom to form the C-terminus of the beta chain, while the remainder of the serine residue undergoes an oxidative deamination to produce ammonia and the pyruvoyl group blocking the N-terminus of the alpha chain.

It carries out the reaction S-adenosyl-L-methionine + H(+) = S-adenosyl 3-(methylsulfanyl)propylamine + CO2. It functions in the pathway amine and polyamine biosynthesis; S-adenosylmethioninamine biosynthesis; S-adenosylmethioninamine from S-adenosyl-L-methionine: step 1/1. In terms of biological role, catalyzes the decarboxylation of S-adenosylmethionine to S-adenosylmethioninamine (dcAdoMet), the propylamine donor required for the synthesis of the polyamines spermine and spermidine from the diamine putrescine. In Salmonella choleraesuis (strain SC-B67), this protein is S-adenosylmethionine decarboxylase proenzyme.